A 532-amino-acid polypeptide reads, in one-letter code: Amidophosphoribosyltransferase 3, chloroplastic (532 aa).

The N-terminal 59 residues, 1-59 (MAFSVEEISSILPNSLSANPRNVSQNTISPSFFKPSLKPYASKTLISLSCRRSLSPVFS), are a transit peptide targeting the chloroplast. Catalysis depends on Cys-77, which acts as the Nucleophile. Residues 77–296 (CGVVGIHGDP…PGEIVVVDRN (220 aa)) enclose the Glutamine amidotransferase type-2 domain. [4Fe-4S] cluster-binding residues include Cys-313, Cys-459, Cys-511, and Cys-514.

In the C-terminal section; belongs to the purine/pyrimidine phosphoribosyltransferase family. [4Fe-4S] cluster is required as a cofactor. Requires Mg(2+) as cofactor. Mostly expressed at low levels in leaves, and, to a lower extent, in cotyledons.

Its subcellular location is the plastid. It localises to the chloroplast stroma. The enzyme catalyses 5-phospho-beta-D-ribosylamine + L-glutamate + diphosphate = 5-phospho-alpha-D-ribose 1-diphosphate + L-glutamine + H2O. It participates in purine metabolism; IMP biosynthesis via de novo pathway; N(1)-(5-phospho-D-ribosyl)glycinamide from 5-phospho-alpha-D-ribose 1-diphosphate: step 1/2. Inhibited by the phenyltriazole acetic acid compound [5-(4-chlorophenyl)-1-isopropyl-1H-[1,2,4]triazol-3-yl]-acetic acid (DAS734), a bleaching herbicide. Repressed by AMP, ADP, ATP and GTP, and slightly by GMP. Catalyzes the first committed step of 'de novo' purine biosynthesis from glutamine. This is Amidophosphoribosyltransferase 3, chloroplastic (ASE3) from Arabidopsis thaliana (Mouse-ear cress).